The chain runs to 141 residues: Putative pre-16S rRNA nuclease (141 aa).

This sequence belongs to the YqgF nuclease family.

It localises to the cytoplasm. Functionally, could be a nuclease involved in processing of the 5'-end of pre-16S rRNA. The polypeptide is Putative pre-16S rRNA nuclease (Sodalis glossinidius (strain morsitans)).